The following is a 133-amino-acid chain: Vesicle transport protein GOT1A (133 aa).

At 1–9 the chain is on the cytoplasmic side; sequence MISITEWQK. The helical transmembrane segment at 10–30 threads the bilayer; it reads IGVGITGFGVFFILFGILLYF. Aspartate 31 is a topological domain (lumenal). Residues 32-52 traverse the membrane as a helical segment; that stretch reads SVLLAFGNLLFLTGLSLIIGL. The Cytoplasmic segment spans residues 53 to 68; the sequence is RRTFAFFFQRHKLKGT. Residues 69-89 form a helical membrane-spanning segment; that stretch reads SFFLGGVAIVLLRWPLLGMLL. The Lumenal segment spans residues 90-92; the sequence is EAY. A helical transmembrane segment spans residues 93–113; sequence GFISLFKGFFPVVFGFLGSAF. The Cytoplasmic segment spans residues 114-133; it reads NIPFLSTLFQKLQGSSSSMV.

This sequence belongs to the GOT1 family.

The protein resides in the golgi apparatus membrane. Functionally, may be involved in fusion of ER-derived transport vesicles with the Golgi complex. The chain is Vesicle transport protein GOT1A from Mus musculus (Mouse).